A 439-amino-acid polypeptide reads, in one-letter code: Protein PHYTOCHROME KINASE SUBSTRATE 1 (439 aa).

The segment covering 1–14 has biased composition (polar residues); it reads MVTLTPSSASTPKT. 3 disordered regions span residues 1 to 22, 54 to 80, and 100 to 139; these read MVTL…MKNN, KTLN…APED, and QGSS…SSWN. Basic and acidic residues predominate over residues 63 to 79; that stretch reads KQEEFGDEKKMVKKAPE. Polar residues-rich tracts occupy residues 100–109 and 118–139; these read QGSSVLSLTN and DSKQ…SSWN. Phosphoserine occurs at positions 238 and 244. 2 disordered regions span residues 259–311 and 355–439; these read LPLP…PTCY and TAKS…LYSQ. Residues 412 to 421 are compositionally biased toward basic and acidic residues; that stretch reads TKPKSFETRR. Over residues 424–439 the composition is skewed to low complexity; that stretch reads SNSSISHTQSSLLYSQ.

This sequence belongs to the PKS family. In terms of assembly, interacts with PKS2, RPT3, PHOT1, PHOT2 and the C-termini of both phytochromes A (phyA) and B (phyB). Binds both spectral forms of phytochrome, Pr and Pfr. Post-translationally, phosphorylated on Ser and to a lower extent on Thr by phytochromes. Phosphorylation is stimulated twofold by red light. In terms of tissue distribution, expressed in young seedlings in both darkness and light. Moderate in leaves and very low in roots and flowers. Expressed in the elongation zone of the root and hypocotyl.

Its subcellular location is the cell membrane. May be responsible for light-regulated cytoplasmic sequestration of phytochromes or may be a negative regulator of phytochrome B signaling. Component of the network that modulates the very low-fluence response (VLFR) branch of phyA signaling. Acts positively in PHOT1 signaling. Regulates phytochrome-mediated photomorphogenesis and hypocotyl phototropism. Involved in the control of leaf flattening and leaf positioning. Promotes negative root phototropism and negatively regulates root gravitropism. May act by controlling auxin homeostasis. The chain is Protein PHYTOCHROME KINASE SUBSTRATE 1 (PKS1) from Arabidopsis thaliana (Mouse-ear cress).